A 382-amino-acid chain; its full sequence is MKQPVIIAAKRIAFGKYGGRLRHLEPESLLEPLFNHFTDQYPKVMSLLDDVILGNTVGNGGNLARKSLLEAGLDFKIPGITIDRQCGSGLEAVIQACRMVQSGAGTIYIAGGVESTSRAPWKIKRPQSVYESEFPQFFERAPFAREGEDPSMIEAAENVAKKYHISRNEQDDFAYRSHQLASKNMNNGNISQEILPFKVKGEYFNQDESIKPQLTLRTLGRLKPLLNEGTVTVGNSCKKNDGAVLLIVMEENRARQLGFTEGIKFVNSATVGVQPQYLGVGPVPAVNQLLAQERLTINDINAVELNEAFSSQVIASQQQLNIPLNKLNCWGGAIATGHPYGASGAALVTRLFYMKHQFRTIATMGIGGGIGNAALFERWYGN.

Cys-86 functions as the Acyl-thioester intermediate in the catalytic mechanism. Residue His-338 is the Proton acceptor of the active site.

Belongs to the thiolase-like superfamily. Thiolase family.

This Staphylococcus epidermidis (strain ATCC 12228 / FDA PCI 1200) protein is Putative acetyl-CoA C-acetyltransferase VraB (vraB).